A 350-amino-acid chain; its full sequence is tRNA uridine(34) hydroxylase (350 aa).

A Rhodanese domain is found at 146–240 (DDPDALFIDM…YARKAREQGL (95 aa)). The active-site Cysteine persulfide intermediate is cysteine 200.

This sequence belongs to the TrhO family.

The catalysed reaction is uridine(34) in tRNA + AH2 + O2 = 5-hydroxyuridine(34) in tRNA + A + H2O. Its function is as follows. Catalyzes oxygen-dependent 5-hydroxyuridine (ho5U) modification at position 34 in tRNAs, the first step in 5-carboxymethoxyuridine (cmo5U) biosynthesis. May be part of an alternate pathway, which is able to bypass cmo5U biogenesis in a subset of tRNAs under aerobic conditions. This is tRNA uridine(34) hydroxylase from Escherichia coli O81 (strain ED1a).